A 67-amino-acid polypeptide reads, in one-letter code: Large ribosomal subunit protein uL29 (67 aa).

Belongs to the universal ribosomal protein uL29 family.

This is Large ribosomal subunit protein uL29 from Cereibacter sphaeroides (strain ATCC 17025 / ATH 2.4.3) (Rhodobacter sphaeroides).